The following is a 155-amino-acid chain: SsrA-binding protein (155 aa).

The protein belongs to the SmpB family.

It is found in the cytoplasm. Functionally, required for rescue of stalled ribosomes mediated by trans-translation. Binds to transfer-messenger RNA (tmRNA), required for stable association of tmRNA with ribosomes. tmRNA and SmpB together mimic tRNA shape, replacing the anticodon stem-loop with SmpB. tmRNA is encoded by the ssrA gene; the 2 termini fold to resemble tRNA(Ala) and it encodes a 'tag peptide', a short internal open reading frame. During trans-translation Ala-aminoacylated tmRNA acts like a tRNA, entering the A-site of stalled ribosomes, displacing the stalled mRNA. The ribosome then switches to translate the ORF on the tmRNA; the nascent peptide is terminated with the 'tag peptide' encoded by the tmRNA and targeted for degradation. The ribosome is freed to recommence translation, which seems to be the essential function of trans-translation. In Bacillus cereus (strain ATCC 10987 / NRS 248), this protein is SsrA-binding protein.